Consider the following 802-residue polypeptide: Osmosensitive cation channel TMEM63C (802 aa).

Over 1-35 (MSAFPDSMDQKFHNMTVNECFQSRSTVLQGQPFGG) the chain is Extracellular. Residues 36–60 (IPTVLVLNIILWVFVVLLYSFLRKA) form a helical membrane-spanning segment. At 61 to 124 (AWDYGRLALL…RDRDLINKCG (64 aa)) the chain is on the cytoplasmic side. S75 and S78 each carry phosphoserine. A helical membrane pass occupies residues 125 to 157 (DDARIYITFQYHLIIFVLILCIPSLGIILPVNY). Topologically, residues 158–180 (IGTVLDWNSHFGRTTIVNVSTES) are extracellular. Residues 181–205 (KFLWLHSLFAFLYFLINLAFMGHHC) traverse the membrane as a helical segment. Over 206-401 (LGFVPKKSLH…IIWKHLSIRR (196 aa)) the chain is Cytoplasmic. The helical transmembrane segment at 402-431 (FSWWTRFIAINTFLFFLFFFLTTPAIIINT) threads the bilayer. Over 432–446 (IDIYNVTRPIEKLQS) the chain is Extracellular. The helical transmembrane segment at 447–476 (PIVTQFFPSVLLWAFTVTMPLLVYLSAFLE) threads the bilayer. Residues 477–480 (AHWT) lie on the Cytoplasmic side of the membrane. A helical transmembrane segment spans residues 481 to 517 (RSSQNLIIVHKCYIFLVFMVVILPSMGLTSLHVFLRW). Over 518-540 (LFDIYYLEHATIRFQCVFLPDNG) the chain is Extracellular. The chain crosses the membrane as a helical span at residues 541-573 (AFFINYVITAALLGTGMELMRLGSLCTYCTRLF). Residues 574–593 (LSKSEPERVHIRKNQATDFQ) lie on the Cytoplasmic side of the membrane. Residues 594-612 (FGREYAWMLNVFSVVMAYS) traverse the membrane as a helical segment. The Extracellular portion of the chain corresponds to 613–615 (ITC). Residues 616-640 (PIIVPFGLLYLCMKHITDRYNMYYS) form a helical membrane-spanning segment. The Cytoplasmic segment spans residues 641 to 647 (YAPTKLN). Residues 648 to 676 (AQIHMAAVYQAIFAPLLGLFWMLFFSILR) traverse the membrane as a helical segment. The Extracellular segment spans residues 677-681 (VGSLH). A helical membrane pass occupies residues 682 to 702 (SITLFSMSSLIISVVIAFSGV). Residues 703–802 (FLGKLRIAQR…EGLEMEGQSH (100 aa)) are Cytoplasmic-facing. A disordered region spans residues 753 to 785 (TPASSPARHTYGTINSQPEEGEEESGLRGFARE).

This sequence belongs to the CSC1 (TC 1.A.17) family. As to quaternary structure, monomer.

It is found in the endoplasmic reticulum membrane. Its subcellular location is the cell membrane. It carries out the reaction Ca(2+)(in) = Ca(2+)(out). In terms of biological role, acts as an osmosensitive cation channel preferentially activated upon hypotonic stress. In contrast to TMEM63B, does not show phospholipid scramblase activity. Enriched in mitochondria-ER contact sites where it may regulate the metabolite flux and organelles' morphologies in response to osmotic changes. In particular may regulate mitochondrial motility and function in motor neuron axons. Required for the functional integrity of the kidney glomerular filtration barrier. The sequence is that of Osmosensitive cation channel TMEM63C from Mus musculus (Mouse).